The sequence spans 294 residues: Phosphonoacetaldehyde hydrolase (294 aa).

D19 (nucleophile) is an active-site residue. Positions 19 and 21 each coordinate Mg(2+). Catalysis depends on K60, which acts as the Schiff-base intermediate with substrate. Mg(2+) is bound at residue D193.

It belongs to the HAD-like hydrolase superfamily. PhnX family. In terms of assembly, homodimer. The cofactor is Mg(2+).

The catalysed reaction is phosphonoacetaldehyde + H2O = acetaldehyde + phosphate + H(+). Functionally, involved in phosphonate degradation. The chain is Phosphonoacetaldehyde hydrolase from Hahella chejuensis (strain KCTC 2396).